A 111-amino-acid chain; its full sequence is Large ribosomal subunit protein uL22 (111 aa).

This sequence belongs to the universal ribosomal protein uL22 family. In terms of assembly, part of the 50S ribosomal subunit.

Functionally, this protein binds specifically to 23S rRNA; its binding is stimulated by other ribosomal proteins, e.g. L4, L17, and L20. It is important during the early stages of 50S assembly. It makes multiple contacts with different domains of the 23S rRNA in the assembled 50S subunit and ribosome. Its function is as follows. The globular domain of the protein is located near the polypeptide exit tunnel on the outside of the subunit, while an extended beta-hairpin is found that lines the wall of the exit tunnel in the center of the 70S ribosome. The polypeptide is Large ribosomal subunit protein uL22 (Geotalea daltonii (strain DSM 22248 / JCM 15807 / FRC-32) (Geobacter daltonii)).